Consider the following 186-residue polypeptide: Nucleoside diphosphate kinase 6 (186 aa).

6 residues coordinate ATP: Lys19, Phe68, Arg96, Thr102, Arg116, and Asn126. His129 acts as the Pros-phosphohistidine intermediate in catalysis.

Belongs to the NDK family. The cofactor is Mg(2+). As to expression, expressed at a moderately low level in many tissues. Most abundant in kidney, prostate, ovary, intestine, and spleen.

The catalysed reaction is a 2'-deoxyribonucleoside 5'-diphosphate + ATP = a 2'-deoxyribonucleoside 5'-triphosphate + ADP. It carries out the reaction a ribonucleoside 5'-diphosphate + ATP = a ribonucleoside 5'-triphosphate + ADP. Its function is as follows. Major role in the synthesis of nucleoside triphosphates other than ATP. The ATP gamma phosphate is transferred to the NDP beta phosphate via a ping-pong mechanism, using a phosphorylated active-site intermediate. Inhibitor of p53-induced apoptosis. The chain is Nucleoside diphosphate kinase 6 (NME6) from Homo sapiens (Human).